Reading from the N-terminus, the 437-residue chain is F-box only protein 9 (437 aa).

The segment at 1–26 (MSAEAEEDCHSDADRVGDEGNESPAE) is disordered. The residue at position 2 (Ser2) is an N-acetylalanine. The span at 8–26 (DCHSDADRVGDEGNESPAE) shows a compositional bias: basic and acidic residues. Position 10 is a phosphoserine (His10). The TPR repeat unit spans residues 84–117 (ARELFLQAVEEEQNGALYEAIKFYRRAMQLVPDI). Ser126 bears the Phosphoserine mark. An F-box domain is found at 175 to 226 (QTHISVLPMEVLMYIFRWVVSSDLDLRSLEQLSLVCRGFYICARDPEIWRLA).

In terms of assembly, part of the SCF (SKP1-CUL1-F-box) E3 ubiquitin-protein ligase complex SCF(FBXO9) composed of CUL1, SKP1, RBX1 and FBXO9. Interacts with TTI1 and TELO2; when TTI1 and TELO2 are phosphorylated by CK2.

The protein localises to the cytoplasm. It functions in the pathway protein modification; protein ubiquitination. Its function is as follows. Substrate recognition component of a SCF (SKP1-CUL1-F-box protein) E3 ubiquitin-protein ligase complex which mediates the ubiquitination and subsequent proteasomal degradation of target proteins and plays a role in several biological processes such as cell cycle, cell proliferation, or maintenance of chromosome stability. Ubiquitinates mTORC1-bound TTI1 and TELO2 when they are phosphorylated by CK2 following growth factor deprivation, leading to their degradation. In contrast, does not mediate ubiquitination of TTI1 and TELO2 when they are part of the mTORC2 complex. As a consequence, mTORC1 is inactivated to restrain cell growth and protein translation, while mTORC2 is the activated due to the relief of feedback inhibition by mTORC1. Plays a role in maintaining epithelial cell survival by regulating the turn-over of chromatin modulator PRMT4 through ubiquitination and degradation by the proteasomal pathway. Also regulates PPARgamma stability by facilitating PPARgamma/PPARG ubiquitination and thereby plays a role in adipocyte differentiation. This Mus musculus (Mouse) protein is F-box only protein 9 (Fbxo9).